Here is a 333-residue protein sequence, read N- to C-terminus: DNA-directed RNA polymerase subunit alpha (333 aa).

The tract at residues 1-234 is alpha N-terminal domain (alpha-NTD); it reads MQSSVNEFLT…QQLAAFVDLK (234 aa). An alpha C-terminal domain (alpha-CTD) region spans residues 248 to 333; it reads IDPILLRPVD…SLKKDDKATA (86 aa).

Belongs to the RNA polymerase alpha chain family. In terms of assembly, homodimer. The RNAP catalytic core consists of 2 alpha, 1 beta, 1 beta' and 1 omega subunit. When a sigma factor is associated with the core the holoenzyme is formed, which can initiate transcription.

The enzyme catalyses RNA(n) + a ribonucleoside 5'-triphosphate = RNA(n+1) + diphosphate. Its function is as follows. DNA-dependent RNA polymerase catalyzes the transcription of DNA into RNA using the four ribonucleoside triphosphates as substrates. This is DNA-directed RNA polymerase subunit alpha from Pseudomonas aeruginosa (strain UCBPP-PA14).